Reading from the N-terminus, the 90-residue chain is DNA-directed RNA polymerase subunit omega (90 aa).

Residues 69-90 (RQEQQEQDAAELAAVSSITHNR) are disordered.

The protein belongs to the RNA polymerase subunit omega family. As to quaternary structure, the RNAP catalytic core consists of 2 alpha, 1 beta, 1 beta' and 1 omega subunit. When a sigma factor is associated with the core the holoenzyme is formed, which can initiate transcription.

It catalyses the reaction RNA(n) + a ribonucleoside 5'-triphosphate = RNA(n+1) + diphosphate. Promotes RNA polymerase assembly. Latches the N- and C-terminal regions of the beta' subunit thereby facilitating its interaction with the beta and alpha subunits. The chain is DNA-directed RNA polymerase subunit omega from Aliivibrio fischeri (strain ATCC 700601 / ES114) (Vibrio fischeri).